The following is a 165-amino-acid chain: RxLR effector protein PITG_09218 (165 aa).

An N-terminal signal peptide occupies residues 1-24; the sequence is MRFSAFLTLLLVAFVASCSTFASA. A RxLR-dEER motif is present at residues 31 to 57; it reads RRLRADAAPVPVNKDNVAKLAGGFLEK. A helical transmembrane segment spans residues 129–149; sequence VTLGATVAGFAIYGAYKALFD.

It belongs to the RxLR effector family.

It is found in the secreted. The protein resides in the host mitochondrion membrane. The protein localises to the host endoplasmic reticulum membrane. Functionally, effector that enhances P.infestans colonization of Nicotiana benthamiana leaves. The chain is RxLR effector protein PITG_09218 from Phytophthora infestans (strain T30-4) (Potato late blight agent).